The chain runs to 69 residues: DNA-directed RNA polymerase subunit epsilon (69 aa).

It belongs to the RNA polymerase subunit epsilon family. RNAP is composed of a core of 2 alpha, a beta and a beta' subunit. The core is associated with a delta subunit, and at least one of epsilon or omega. When a sigma factor is associated with the core the holoenzyme is formed, which can initiate transcription.

The catalysed reaction is RNA(n) + a ribonucleoside 5'-triphosphate = RNA(n+1) + diphosphate. A non-essential component of RNA polymerase (RNAP). The polypeptide is DNA-directed RNA polymerase subunit epsilon (Lysinibacillus sphaericus (strain C3-41)).